Here is a 460-residue protein sequence, read N- to C-terminus: Inactive ubiquitin carboxyl-terminal hydrolase MINDY-4B (460 aa).

The disordered stretch occupies residues 41–76 (TNNSTPQNHEGNHTSADENEDGTGLSQPKGQGHLPS).

It belongs to the MINDY deubiquitinase family. FAM188 subfamily.

The sequence is that of Inactive ubiquitin carboxyl-terminal hydrolase MINDY-4B from Homo sapiens (Human).